Reading from the N-terminus, the 760-residue chain is Photosystem I P700 chlorophyll a apoprotein A1 (760 aa).

A disordered region spans residues 1 to 22 (MTISPPESGEKDKKILESPVKA). The segment covering 8–22 (SGEKDKKILESPVKA) has biased composition (basic and acidic residues). The next 8 helical transmembrane spans lie at 76 to 99 (IFSAHFGHLAVIFIWMSAAFFHGA), 162 to 185 (LMALAIGAVVMAALMLHAGIFHYH), 201 to 225 (MNHHLAGLLGLGSLAWAGHTIHIGA), 309 to 327 (IAHHHLAIAVLFIIAGHMY), 368 to 391 (RHAQLSVNLALLGSLSIIISHHMY), 407 to 433 (LGLFTHHMWIGGLFIVGAGAHAGIAMV), 455 to 477 (ALISHLNWVCMWLGFHSFGLYIH), and 551 to 569 (LMIHHIHAFQIHVTVLILL). Residues Cys-593 and Cys-602 each contribute to the [4Fe-4S] cluster site. The next 2 helical transmembrane spans lie at 609–630 (HVFLALFWMYNCLSIVIFHFSW) and 674–696 (ISMYGLMFLGAHFIWAFSLMFLF). Position 685 (His-685) interacts with divinylchlorophyll a'. Residues Met-693 and Tyr-701 each coordinate divinyl chlorophyll a. Trp-702 provides a ligand contact to phylloquinone. A helical membrane pass occupies residues 734–754 (AVGVTHFLVGGIATTWAFFHA).

The protein belongs to the PsaA/PsaB family. In terms of assembly, the PsaA/B heterodimer binds the P700 divinyl chlorophyll special pair and subsequent electron acceptors. PSI consists of a core antenna complex that captures photons, and an electron transfer chain that converts photonic excitation into a charge separation. The cyanobacterial PSI reaction center is composed of one copy each of PsaA,B,C,D,E,F,I,J,K,L,M and X, and forms trimeric complexes. PSI electron transfer chain: 5 divinyl chlorophyll a, 1 divinyl chlorophyll a', 2 phylloquinones and 3 4Fe-4S clusters. PSI core antenna: 90 divinyl chlorophyll a, 22 carotenoids, 3 phospholipids and 1 galactolipid. P700 is a divinyl chlorophyll a/divinyl chlorophyll a' dimer, A0 is one or more divinyl chlorophyll a, A1 is one or both phylloquinones and FX is a shared 4Fe-4S iron-sulfur center. is required as a cofactor.

It localises to the cellular thylakoid membrane. It catalyses the reaction reduced [plastocyanin] + hnu + oxidized [2Fe-2S]-[ferredoxin] = oxidized [plastocyanin] + reduced [2Fe-2S]-[ferredoxin]. Its function is as follows. PsaA and PsaB bind P700, the primary electron donor of photosystem I (PSI), as well as the electron acceptors A0, A1 and FX. PSI is a plastocyanin/cytochrome c6-ferredoxin oxidoreductase, converting photonic excitation into a charge separation, which transfers an electron from the donor P700 chlorophyll pair to the spectroscopically characterized acceptors A0, A1, FX, FA and FB in turn. Oxidized P700 is reduced on the lumenal side of the thylakoid membrane by plastocyanin or cytochrome c6. This is Photosystem I P700 chlorophyll a apoprotein A1 from Prochlorococcus marinus (strain MIT 9515).